The sequence spans 212 residues: Protein FAM177A1 (212 aa).

M1 is subject to N-acetylmethionine. The span at 1-11 shows a compositional bias: basic and acidic residues; that stretch reads MEGEPASREEG. The tract at residues 1–33 is disordered; sequence MEGEPASREEGEAVNASGAAAASAFRESAQQMS. A compositionally biased stretch (low complexity) spans 13-29; that stretch reads AVNASGAAAASAFRESA. Residue S69 is modified to Phosphoserine. T70 carries the phosphothreonine modification. Residues 135 to 172 adopt a coiled-coil conformation; it reads IDEYYRMKKEEEEEEEENRMSEEAERQYQQNKLQADSV. The disordered stretch occupies residues 146–179; the sequence is EEEEEENRMSEEAERQYQQNKLQADSVVQSDQPE. Positions 161–179 are enriched in polar residues; it reads QYQQNKLQADSVVQSDQPE.

This sequence belongs to the FAM177 family.

The protein is Protein FAM177A1 (FAM177A1) of Bos taurus (Bovine).